Consider the following 607-residue polypeptide: Fatty acid amide hydrolase (607 aa).

Residues Lys-205 and Ser-281 each act as charge relay system in the active site. Residue Gly-302–Ser-305 participates in substrate binding. Ser-305 serves as the catalytic Acyl-ester intermediate.

Belongs to the amidase family. As to quaternary structure, forms homodimers. Expressed in roots, leaves and flowers. Expressed in seedlings, flowers, roots, siliques, seeds and leaves.

The protein localises to the endoplasmic reticulum membrane. It localises to the cell membrane. The catalysed reaction is N-(5Z,8Z,11Z,14Z-eicosatetraenoyl)-ethanolamine + H2O = ethanolamine + (5Z,8Z,11Z,14Z)-eicosatetraenoate. It carries out the reaction N-(9Z,12Z-octadecadienoyl)-ethanolamine + H2O = ethanolamine + (9Z,12Z)-octadecadienoate. It catalyses the reaction N-hexadecanoylethanolamine + H2O = ethanolamine + hexadecanoate. The enzyme catalyses N-tetradecanoylethanolamine + H2O = tetradecanoate + ethanolamine. The catalysed reaction is N-dodecanoylethanolamine + H2O = dodecanoate + ethanolamine. With respect to regulation, inhibited by methyl arachidonyl fluorophosphonate (MAFP). Functionally, catalyzes the hydrolysis of bioactive endogenous fatty acid amides to their corresponding acids. The hydrolysis of endogenous amidated lipids terminates their participation as lipid mediators in various signaling systems. Converts a wide range of N-acylethanolamines (NAEs) to their corresponding free fatty acids and ethanolamine. Can use oleamide as substrate, but not indole-3-acetamide, 1-naphtalene-acetamide, nicotinic acid amide or L-asparagine. Can use 2-arachidonylglycerol as substrate. Participates in the regulation of plant growth. Hydrolyzes N-dodecanoylethanolamine, which is has a growth inhibitory effect on seedling growth. Involved in plant defense signaling. Involved in abscisic acid (ABA) signaling through mechanisms that are independent of the catalytic activity. Involved in the regulation of flowering time. Catalyzes the hydrolysis of N-acyl L-homoserine lactones (AHLs), which are a class of signaling molecules produced by bacteria for quorum sensing. Accumulation of L-homoserine appears to encourage plant growth at low concentrations by stimulating transpiration, but higher concentrations inhibit growth by stimulating ethylene production. The protein is Fatty acid amide hydrolase of Arabidopsis thaliana (Mouse-ear cress).